The sequence spans 141 residues: Endoribonuclease YbeY (141 aa).

Zn(2+) is bound by residues histidine 100, histidine 104, and histidine 110.

This sequence belongs to the endoribonuclease YbeY family. The cofactor is Zn(2+).

Its subcellular location is the cytoplasm. Single strand-specific metallo-endoribonuclease involved in late-stage 70S ribosome quality control and in maturation of the 3' terminus of the 16S rRNA. This is Endoribonuclease YbeY from Helicobacter pylori (strain J99 / ATCC 700824) (Campylobacter pylori J99).